The chain runs to 646 residues: Threonine--tRNA ligase (646 aa).

Positions 1-61 (MIKITFPDGS…NEDADFVLYK (61 aa)) constitute a TGS domain. The segment at 242–541 (DHRKIGKEMQ…LIEHTAGKFP (300 aa)) is catalytic. Positions 337, 388, and 518 each coordinate Zn(2+).

The protein belongs to the class-II aminoacyl-tRNA synthetase family. In terms of assembly, homodimer. Zn(2+) is required as a cofactor.

The protein resides in the cytoplasm. The enzyme catalyses tRNA(Thr) + L-threonine + ATP = L-threonyl-tRNA(Thr) + AMP + diphosphate + H(+). Its function is as follows. Catalyzes the attachment of threonine to tRNA(Thr) in a two-step reaction: L-threonine is first activated by ATP to form Thr-AMP and then transferred to the acceptor end of tRNA(Thr). Also edits incorrectly charged L-seryl-tRNA(Thr). The polypeptide is Threonine--tRNA ligase (Bacteroides thetaiotaomicron (strain ATCC 29148 / DSM 2079 / JCM 5827 / CCUG 10774 / NCTC 10582 / VPI-5482 / E50)).